Consider the following 707-residue polypeptide: Polyribonucleotide nucleotidyltransferase (707 aa).

2 residues coordinate Mg(2+): aspartate 491 and aspartate 497. The KH domain maps to 558-617 (PRIEKIKIHPDKIGLLIGPGGKTIKKISAESGAEITIEDDGTVMIYSSSADSLEAAREMI). Residues 622-695 (GEVTVGGIYR…EKGRYKFSRK (74 aa)) enclose the S1 motif domain.

The protein belongs to the polyribonucleotide nucleotidyltransferase family. Mg(2+) is required as a cofactor.

It localises to the cytoplasm. The enzyme catalyses RNA(n+1) + phosphate = RNA(n) + a ribonucleoside 5'-diphosphate. Its function is as follows. Involved in mRNA degradation. Catalyzes the phosphorolysis of single-stranded polyribonucleotides processively in the 3'- to 5'-direction. This is Polyribonucleotide nucleotidyltransferase from Methylacidiphilum infernorum (isolate V4) (Methylokorus infernorum (strain V4)).